A 134-amino-acid polypeptide reads, in one-letter code: Transcription antitermination protein NusB (134 aa).

Belongs to the NusB family.

Its function is as follows. Involved in transcription antitermination. Required for transcription of ribosomal RNA (rRNA) genes. Binds specifically to the boxA antiterminator sequence of the ribosomal RNA (rrn) operons. This is Transcription antitermination protein NusB from Shewanella loihica (strain ATCC BAA-1088 / PV-4).